The following is a 580-amino-acid chain: NADH-quinone oxidoreductase subunit C/D (580 aa).

Residues 1–171 form an NADH dehydrogenase I subunit C region; it reads MSLDQAIPEA…PPFVLTDRLF (171 aa). An NADH dehydrogenase I subunit D region spans residues 195–580; that stretch reads ELMVLNFGPH…IDFVMSDVDR (386 aa).

In the N-terminal section; belongs to the complex I 30 kDa subunit family. It in the C-terminal section; belongs to the complex I 49 kDa subunit family. As to quaternary structure, NDH-1 is composed of 13 different subunits. Subunits NuoB, CD, E, F, and G constitute the peripheral sector of the complex.

Its subcellular location is the cell inner membrane. The enzyme catalyses a quinone + NADH + 5 H(+)(in) = a quinol + NAD(+) + 4 H(+)(out). In terms of biological role, NDH-1 shuttles electrons from NADH, via FMN and iron-sulfur (Fe-S) centers, to quinones in the respiratory chain. The immediate electron acceptor for the enzyme in this species is believed to be ubiquinone. Couples the redox reaction to proton translocation (for every two electrons transferred, four hydrogen ions are translocated across the cytoplasmic membrane), and thus conserves the redox energy in a proton gradient. The polypeptide is NADH-quinone oxidoreductase subunit C/D (Cereibacter sphaeroides (strain ATCC 17029 / ATH 2.4.9) (Rhodobacter sphaeroides)).